Consider the following 565-residue polypeptide: NAD-dependent malic enzyme (565 aa).

The Proton donor role is filled by Tyr-104. Residue Arg-157 coordinates NAD(+). The active-site Proton acceptor is the Lys-175. Glu-246, Asp-247, and Asp-270 together coordinate a divalent metal cation. NAD(+)-binding residues include Asp-270 and Asn-418.

Belongs to the malic enzymes family. Homotetramer. The cofactor is Mg(2+). Mn(2+) serves as cofactor.

The enzyme catalyses (S)-malate + NAD(+) = pyruvate + CO2 + NADH. It catalyses the reaction oxaloacetate + H(+) = pyruvate + CO2. The polypeptide is NAD-dependent malic enzyme (Klebsiella pneumoniae (strain 342)).